The primary structure comprises 552 residues: Probable ABC transporter ATP-binding/permease protein HI_0664 (552 aa).

The next 6 membrane-spanning stretches (helical) occupy residues 22–42, 52–72, 139–159, 162–182, 253–273, and 278–298; these read IMAF…FIMV, LNFD…VLAV, IAPI…FAQL, WFVL…PIIT, EVAV…LFSL, and FAAF…VIAL. The ABC transmembrane type-1 domain occupies 23 to 307; that stretch reads MAFTITMGTL…LSNLSSNLLQ (285 aa). One can recognise an ABC transporter domain in the interval 340–552; that stretch reads IDVENVNFAY…VIGIENGRMS (213 aa). ATP is bound at residue 372-379; that stretch reads GRSGSGKS.

The protein belongs to the ABC transporter superfamily. Lipid exporter (TC 3.A.1.106) family.

The protein resides in the cell inner membrane. The protein is Probable ABC transporter ATP-binding/permease protein HI_0664 of Haemophilus influenzae (strain ATCC 51907 / DSM 11121 / KW20 / Rd).